We begin with the raw amino-acid sequence, 601 residues long: uncharacterized protein (601 aa).

The signal sequence occupies residues Met-1–Ala-24.

The protein localises to the membrane. This is an uncharacterized protein from Schizosaccharomyces pombe (strain 972 / ATCC 24843) (Fission yeast).